The primary structure comprises 95 residues: Aspartyl/glutamyl-tRNA(Asn/Gln) amidotransferase subunit C (95 aa).

Belongs to the GatC family. Heterotrimer of A, B and C subunits.

It carries out the reaction L-glutamyl-tRNA(Gln) + L-glutamine + ATP + H2O = L-glutaminyl-tRNA(Gln) + L-glutamate + ADP + phosphate + H(+). It catalyses the reaction L-aspartyl-tRNA(Asn) + L-glutamine + ATP + H2O = L-asparaginyl-tRNA(Asn) + L-glutamate + ADP + phosphate + 2 H(+). Allows the formation of correctly charged Asn-tRNA(Asn) or Gln-tRNA(Gln) through the transamidation of misacylated Asp-tRNA(Asn) or Glu-tRNA(Gln) in organisms which lack either or both of asparaginyl-tRNA or glutaminyl-tRNA synthetases. The reaction takes place in the presence of glutamine and ATP through an activated phospho-Asp-tRNA(Asn) or phospho-Glu-tRNA(Gln). The protein is Aspartyl/glutamyl-tRNA(Asn/Gln) amidotransferase subunit C of Dinoroseobacter shibae (strain DSM 16493 / NCIMB 14021 / DFL 12).